The following is a 294-amino-acid chain: 33 kDa chaperonin (294 aa).

Cystine bridges form between C238-C240 and C271-C274.

Belongs to the HSP33 family. Under oxidizing conditions two disulfide bonds are formed involving the reactive cysteines. Under reducing conditions zinc is bound to the reactive cysteines and the protein is inactive.

The protein resides in the cytoplasm. Functionally, redox regulated molecular chaperone. Protects both thermally unfolding and oxidatively damaged proteins from irreversible aggregation. Plays an important role in the bacterial defense system toward oxidative stress. The chain is 33 kDa chaperonin from Clostridium novyi (strain NT).